We begin with the raw amino-acid sequence, 81 residues long: Sulfur carrier protein TusA (81 aa).

Cys-19 (cysteine persulfide intermediate) is an active-site residue.

The protein belongs to the sulfur carrier protein TusA family. Interacts with IscS.

It localises to the cytoplasm. Its pathway is tRNA modification. Its function is as follows. Sulfur carrier protein involved in sulfur trafficking in the cell. Part of a sulfur-relay system required for 2-thiolation during synthesis of 2-thiouridine of the modified wobble base 5-methylaminomethyl-2-thiouridine (mnm(5)s(2)U) in tRNA. Interacts with IscS and stimulates its cysteine desulfurase activity. Accepts an activated sulfur from IscS, which is then transferred to TusD, and thus determines the direction of sulfur flow from IscS to 2-thiouridine formation. Also appears to be involved in sulfur transfer for the biosynthesis of molybdopterin. This chain is Sulfur carrier protein TusA, found in Enterobacter sp. (strain 638).